The following is a 112-amino-acid chain: MRREERNMDKLLISFLLSLFMVYFPPSDVVLPSQFEASTDSYVPMSSYPQETQSAKTPSPGSMHPAELIKEYSPLAQSVRQLSVKPLDEPLINRLEKALAVPVKYQSNYLRI.

A disordered region spans residues 42 to 64; that stretch reads YVPMSSYPQETQSAKTPSPGSMH. Residues 47-60 are compositionally biased toward polar residues; sequence SYPQETQSAKTPSP.

The protein resides in the cell membrane. Functionally, modulates the activity of the potassium/proton antiporter KhtU. Involved in protection of the cell from methylglyoxal, a toxic by-product of glycolysis. The protein is K(+)/H(+) antiporter modulator KhtS of Bacillus subtilis (strain 168).